We begin with the raw amino-acid sequence, 322 residues long: Mas-related G-protein coupled receptor member X1 (322 aa).

Over M1 to T31 the chain is Extracellular. An N-linked (GlcNAc...) asparagine glycan is attached at N16. Residues V32–L52 traverse the membrane as a helical segment. At G53 to N67 the chain is on the cytoplasmic side. Residues L68–I88 traverse the membrane as a helical segment. The Extracellular segment spans residues S89–K96. Residues I97–S117 traverse the membrane as a helical segment. Topologically, residues T118–V144 are cytoplasmic. A helical membrane pass occupies residues L145–F165. The Extracellular portion of the chain corresponds to S166 to D177. Residues F178–L198 form a helical membrane-spanning segment. At L199–T221 the chain is on the cytoplasmic side. The helical transmembrane segment at V222–I242 threads the bilayer. Residues H243–H254 are Extracellular-facing. Residues L255 to V275 traverse the membrane as a helical segment. The Cytoplasmic segment spans residues G276–Q322.

Belongs to the G-protein coupled receptor 1 family. Mas subfamily. Uniquely localized in a subset of small dorsal root and trigeminal sensory neurons.

Its subcellular location is the cell membrane. In terms of biological role, orphan receptor. Probably involved in the function of nociceptive neurons. May regulate nociceptor function and/or development, including the sensation or modulation of pain. Potently activated by enkephalins including BAM22 (bovine adrenal medulla peptide 22) and BAM (8-22). BAM22 is the most potent compound and evoked a large and dose-dependent release of intracellular calcium in stably transfected cells. G(alpha)q proteins are involved in the calcium-signaling pathway. Activated by the antimalarial drug, chloroquine. May mediate chloroquine-induced itch, in a histamine-independent manner. The polypeptide is Mas-related G-protein coupled receptor member X1 (MRGPRX1) (Homo sapiens (Human)).